Reading from the N-terminus, the 254-residue chain is tRNA (guanine-N(1)-)-methyltransferase (254 aa).

Residues Gly-115 and 135–140 each bind S-adenosyl-L-methionine; that span reads VGDFVL.

Belongs to the RNA methyltransferase TrmD family. Homodimer.

It localises to the cytoplasm. It carries out the reaction guanosine(37) in tRNA + S-adenosyl-L-methionine = N(1)-methylguanosine(37) in tRNA + S-adenosyl-L-homocysteine + H(+). Specifically methylates guanosine-37 in various tRNAs. The chain is tRNA (guanine-N(1)-)-methyltransferase from Francisella tularensis subsp. tularensis (strain FSC 198).